A 173-amino-acid polypeptide reads, in one-letter code: Crossover junction endodeoxyribonuclease RuvC (173 aa).

Residues aspartate 8, glutamate 67, and aspartate 139 contribute to the active site. Residues aspartate 8, glutamate 67, and aspartate 139 each coordinate Mg(2+).

Belongs to the RuvC family. As to quaternary structure, homodimer which binds Holliday junction (HJ) DNA. The HJ becomes 2-fold symmetrical on binding to RuvC with unstacked arms; it has a different conformation from HJ DNA in complex with RuvA. In the full resolvosome a probable DNA-RuvA(4)-RuvB(12)-RuvC(2) complex forms which resolves the HJ. Mg(2+) is required as a cofactor.

It localises to the cytoplasm. It catalyses the reaction Endonucleolytic cleavage at a junction such as a reciprocal single-stranded crossover between two homologous DNA duplexes (Holliday junction).. Functionally, the RuvA-RuvB-RuvC complex processes Holliday junction (HJ) DNA during genetic recombination and DNA repair. Endonuclease that resolves HJ intermediates. Cleaves cruciform DNA by making single-stranded nicks across the HJ at symmetrical positions within the homologous arms, yielding a 5'-phosphate and a 3'-hydroxyl group; requires a central core of homology in the junction. The consensus cleavage sequence is 5'-(A/T)TT(C/G)-3'. Cleavage occurs on the 3'-side of the TT dinucleotide at the point of strand exchange. HJ branch migration catalyzed by RuvA-RuvB allows RuvC to scan DNA until it finds its consensus sequence, where it cleaves and resolves the cruciform DNA. The sequence is that of Crossover junction endodeoxyribonuclease RuvC from Baumannia cicadellinicola subsp. Homalodisca coagulata.